Reading from the N-terminus, the 143-residue chain is MTYTISIRVYQTTPKGFFRPVERTNWKYANGGTWDEVRGEYVLTMGGSGTSGSLRFVSSDTDESFVATFGVHNYKRWCDIVTNLTNEQTALVINQEYYGVPIRDQARENQLTSYNVANAKGRRFAIEYTVTEGDNLKANLIIG.

Positions 29, 48, 49, and 73 each coordinate beta-D-Gal-(1-&gt;3)-alpha-D-GalNAc. N-acetyl-beta-D-glucosamine is bound by residues threonine 82, arginine 103, and tyrosine 114.

Belongs to the fungal fruit body lectin family. In terms of assembly, homotetramer.

Functionally, lectin that recognizes O-linked galactose-beta-1,3-N-acetylgalactosamine, a disaccharide (Thomsen-Friedenreich antigen or T-disaccharide), present on cell surface glycoproteins. Can also bind galactose-beta-1,3-N-acetylglucosamine. Does not bind monosaccharides. Can be internalized by clathrin-coated vesicles after binding to surface glycoproteins. After internalization it inhibits nuclear import of nuclear localization signal dependent proteins. Inhibits proliferation of malignant cells without cytotoxicity for normal cells. The protein is Agaricus bisporus lectin of Agaricus bisporus (White button mushroom).